The primary structure comprises 341 residues: MVGEMEVKERPRPSPDYLMQLLNEKKLMTSLPNLCGIFTHLERLLDEEINRVRKDMYNDSVNGLVDKHPLELPEPVGPIVHLQEKLFVPVKEYPDYNFVGRILGPRGLTAKQLEAETGCKIMVRGRSSMRDKKKEEQNRGKPNWEHLNEDLHVLITVEDTQTRAEIKMRRAVEEVKKLLVPAAEGEDNLKKMQLMELAILNGTYRDTNIKAPTLAFSLAAAAAAAQGPRLIAAPPGQVLPPATLRPPTPAGTPIMNIIRPTQMATVLPNGTPTLVPPTPDAGIIYTTPYDYPYALAPTSLLEYPIEHSGVLGAMATKVRRHDSRVHPYQRIVTADRAATGN.

The KH domain maps to 87 to 153 (FVPVKEYPDY…WEHLNEDLHV (67 aa)). Positions 276 to 279 (PPTP) match the SH3-binding motif. Residues 324–330 (RVHPYQR) carry the Nuclear localization signal motif.

Belongs to the quaking family. Homodimer; does not require RNA to homodimerize.

The protein resides in the cytoplasm. It is found in the nucleus. Its function is as follows. RNA reader protein, which recognizes and binds specific RNAs, thereby regulating RNA metabolic processes, such as pre-mRNA splicing, circular RNA (circRNA) formation, mRNA export, mRNA stability and/or translation. Involved in various cellular processes, such as mRNA storage into stress granules, apoptosis, interferon response, glial cell fate and development. Binds to the 5'-NACUAAY-N(1,20)-UAAY-3' RNA core sequence. Acts as a mRNA modification reader that specifically recognizes and binds mRNA transcripts modified by internal N(7)-methylguanine (m7G). Promotes the formation of circular RNAs (circRNAs): acts by binding to sites flanking circRNA-forming exons. CircRNAs are produced by back-splicing circularization of pre-mRNAs. Required to protect and promote stability of mRNAs which promotes oligodendrocyte differentiation. Acts as an important regulator of muscle development: required during early skeletal myofibril formation by regulating the accumulation of the muscle-specific tropomyosin-3 (tpm3) transcripts. The chain is Protein quaking-A from Danio rerio (Zebrafish).